The primary structure comprises 797 residues: GDH/6PGL endoplasmic bifunctional protein (797 aa).

Residues 1–24 (MKCPGVWGMLTVTMCVVFLGCPQA) form the signal peptide. Position 25 is a pyrrolidone carboxylic acid (Gln25). The interval 25-531 (QELQGHVSVI…SGSHLSFSLG (507 aa)) is hexose-6-phosphate dehydrogenase. NADP(+) contacts are provided by residues 37–44 (GATGDLAK) and Tyr154. N-linked (GlcNAc...) asparagine glycosylation occurs at Asn162. Lys179 contributes to the NADP(+) binding site. D-glucose 6-phosphate is bound by residues Lys179, 209–213 (HYLGK), Glu248, and Asp267. Position 213 is an N6-succinyllysine (Lys213). The Proton acceptor role is filled by His272. Residue Asn287 is glycosylated (N-linked (GlcNAc...) asparagine). Lys365 and Arg370 together coordinate D-glucose 6-phosphate. Arg375 lines the NADP(+) pocket. Residues 532–545 (QPEQLVPGPGSTPR) are linker. The interval 546–797 (PSDFQVLGAK…WYMDYEAFLG (252 aa)) is 6-phosphogluconolactonase. Residue Trp623 coordinates NADP(+). Residue Asn689 is glycosylated (N-linked (GlcNAc...) asparagine).

In the N-terminal section; belongs to the glucose-6-phosphate dehydrogenase family. The protein in the C-terminal section; belongs to the glucosamine/galactosamine-6-phosphate isomerase family. 6-phosphogluconolactonase subfamily. Homodimer.

It localises to the endoplasmic reticulum lumen. The enzyme catalyses D-glucose 6-phosphate + NAD(+) = 6-phospho-D-glucono-1,5-lactone + NADH + H(+). It carries out the reaction D-glucose 6-phosphate + NADP(+) = 6-phospho-D-glucono-1,5-lactone + NADPH + H(+). It catalyses the reaction 6-phospho-D-glucono-1,5-lactone + H2O = 6-phospho-D-gluconate + H(+). The catalysed reaction is 2-deoxy-D-glucose 6-phosphate + NAD(+) = 2-deoxy-6-phospho-D-glucono-1,5-lactone + NADH + H(+). The enzyme catalyses 2-deoxy-D-glucose 6-phosphate + NADP(+) = 2-deoxy-6-phospho-D-glucono-1,5-lactone + NADPH + H(+). It carries out the reaction D-galactose 6-phosphate + NADP(+) = 6-phospho-D-galactono-1,5-lactone + NADPH + H(+). It catalyses the reaction D-galactose 6-phosphate + NAD(+) = 6-phospho-D-galactono-1,5-lactone + NADH + H(+). The catalysed reaction is D-glucosamine 6-phosphate + NADP(+) = 2-amino-2-deoxy-6-phospho-D-glucono-1,5-lactone + NADPH + 2 H(+). The enzyme catalyses D-glucose + NAD(+) = D-glucono-1,5-lactone + NADH + H(+). It carries out the reaction D-glucose + NADP(+) = D-glucono-1,5-lactone + NADPH + H(+). It catalyses the reaction D-glucose 6-sulfate + NADP(+) = 6-sulfo-D-glucono-1,5-lactone + NADPH + H(+). It participates in carbohydrate degradation; pentose phosphate pathway; D-ribulose 5-phosphate from D-glucose 6-phosphate (oxidative stage). Its pathway is carbohydrate degradation; pentose phosphate pathway; D-ribulose 5-phosphate from D-glucose 6-phosphate (oxidative stage): step 2/3. Its function is as follows. Bifunctional enzyme localized in the lumen of the endoplasmic reticulum that catalyzes the first two steps of the oxidative branch of the pentose phosphate pathway/shunt, an alternative to glycolysis and a major source of reducing power and metabolic intermediates for biosynthetic processes. Has a hexose-6-phosphate dehydrogenase activity, with broad substrate specificity compared to glucose-6-phosphate 1-dehydrogenase/G6PD, and catalyzes the first step of the pentose phosphate pathway. In addition, acts as a 6-phosphogluconolactonase and catalyzes the second step of the pentose phosphate pathway. May have a dehydrogenase activity for alternative substrates including glucosamine 6-phosphate and glucose 6-sulfate. The main function of this enzyme is to provide reducing equivalents such as NADPH to maintain the adequate levels of reductive cofactors in the oxidizing environment of the endoplasmic reticulum. By producing NADPH that is needed by reductases of the lumen of the endoplasmic reticulum like corticosteroid 11-beta-dehydrogenase isozyme 1/HSD11B1, indirectly regulates their activity. The protein is GDH/6PGL endoplasmic bifunctional protein of Oryctolagus cuniculus (Rabbit).